Consider the following 337-residue polypeptide: Methylthioribose-1-phosphate isomerase (337 aa).

Substrate-binding positions include Arg-47–Ala-49, Arg-81, and Gln-184. The active-site Proton donor is Asp-225. Asn-235–Lys-236 provides a ligand contact to substrate.

Belongs to the eIF-2B alpha/beta/delta subunits family. MtnA subfamily.

The catalysed reaction is 5-(methylsulfanyl)-alpha-D-ribose 1-phosphate = 5-(methylsulfanyl)-D-ribulose 1-phosphate. It functions in the pathway amino-acid biosynthesis; L-methionine biosynthesis via salvage pathway; L-methionine from S-methyl-5-thio-alpha-D-ribose 1-phosphate: step 1/6. Functionally, catalyzes the interconversion of methylthioribose-1-phosphate (MTR-1-P) into methylthioribulose-1-phosphate (MTRu-1-P). This Parasynechococcus marenigrum (strain WH8102) protein is Methylthioribose-1-phosphate isomerase.